We begin with the raw amino-acid sequence, 180 residues long: MFEATTILGYRGEMGGKKFALIGGDGQVTLGNCVVKANATKIRSLYHNQVLSGFAGSTADAFSLFDMFERILESKKGDLFKSVVDFSKEWRKDKYLRRLEAMMIVLNLDHIFILSGMGDVLEAEDNKIAAIGSGGNYALSAARALDHFAHLEPRKLVEESLKIAGDLCIYTNTNIKILEL.

Threonine 5 is an active-site residue. Residues glycine 165, cysteine 168, and threonine 171 each coordinate Na(+).

This sequence belongs to the peptidase T1B family. HslV subfamily. A double ring-shaped homohexamer of HslV is capped on each side by a ring-shaped HslU homohexamer. The assembly of the HslU/HslV complex is dependent on binding of ATP.

Its subcellular location is the cytoplasm. The catalysed reaction is ATP-dependent cleavage of peptide bonds with broad specificity.. Allosterically activated by HslU binding. In terms of biological role, protease subunit of a proteasome-like degradation complex believed to be a general protein degrading machinery. This chain is ATP-dependent protease subunit HslV, found in Helicobacter pylori (strain G27).